Here is a 125-residue protein sequence, read N- to C-terminus: DNA-directed RNA polymerases I and III subunit RPAC2 (125 aa).

It belongs to the archaeal Rpo11/eukaryotic RPB11/RPC19 RNA polymerase subunit family. Component of the RNA polymerase I (Pol I) and RNA polymerase III (Pol III) complexes consisting of 14 and 17 subunits, respectively.

The protein localises to the nucleus. Its function is as follows. DNA-dependent RNA polymerase catalyzes the transcription of DNA into RNA using the four ribonucleoside triphosphates as substrates. Common core component of RNA polymerases I and III which synthesize ribosomal RNA precursors and small RNAs, such as 5S rRNA and tRNAs, respectively. This Schizosaccharomyces pombe (strain 972 / ATCC 24843) (Fission yeast) protein is DNA-directed RNA polymerases I and III subunit RPAC2 (rpc19).